The chain runs to 159 residues: Protein Smg homolog (159 aa).

Belongs to the Smg family.

The polypeptide is Protein Smg homolog (Vibrio campbellii (strain ATCC BAA-1116)).